The primary structure comprises 1464 residues: DNA polymerase III PolC-type (1464 aa).

Residues 426–582 (YVVFDVETTG…YDAEATGRLL (157 aa)) form the Exonuclease domain.

The protein belongs to the DNA polymerase type-C family. PolC subfamily.

The protein resides in the cytoplasm. It catalyses the reaction DNA(n) + a 2'-deoxyribonucleoside 5'-triphosphate = DNA(n+1) + diphosphate. Its function is as follows. Required for replicative DNA synthesis. This DNA polymerase also exhibits 3' to 5' exonuclease activity. The polypeptide is DNA polymerase III PolC-type (Streptococcus thermophilus (strain CNRZ 1066)).